The sequence spans 220 residues: Flavin-dependent thymidylate synthase (220 aa).

A ThyX domain is found at 1–208 (MKIDILDKGF…PWTFEAFLKY (208 aa)). FAD is bound by residues threonine 55, 78-80 (RHR), and glutamate 86. DUMP is bound by residues 75–78 (QWFR), 86–90 (ELSGR), and arginine 147. Residues 78 to 88 (RHRIASYNELS) carry the ThyX motif motif. FAD contacts are provided by residues 163–165 (NAR) and asparagine 169. Arginine 174 serves as a coordination point for dUMP. Residue arginine 174 is the Involved in ionization of N3 of dUMP, leading to its activation of the active site.

Belongs to the thymidylate synthase ThyX family. In terms of assembly, homotetramer. The cofactor is FAD.

The catalysed reaction is dUMP + (6R)-5,10-methylene-5,6,7,8-tetrahydrofolate + NADPH + H(+) = dTMP + (6S)-5,6,7,8-tetrahydrofolate + NADP(+). It functions in the pathway pyrimidine metabolism; dTTP biosynthesis. Functionally, catalyzes the reductive methylation of 2'-deoxyuridine-5'-monophosphate (dUMP) to 2'-deoxythymidine-5'-monophosphate (dTMP) while utilizing 5,10-methylenetetrahydrofolate (mTHF) as the methyl donor, and NADPH and FADH(2) as the reductant. This Thermotoga petrophila (strain ATCC BAA-488 / DSM 13995 / JCM 10881 / RKU-1) protein is Flavin-dependent thymidylate synthase.